The primary structure comprises 345 residues: Beta-2-glycoprotein 1 (345 aa).

Positions 1-19 are cleaved as a signal peptide; sequence MISPVLILFSSFLCHVAIA. Sushi domains are found at residues 21–81, 82–139, 140–202, and 203–262; these read RTCP…KCTP, RVCP…VCAP, ITCP…ECRE, and VKCP…SCKA. 11 disulfides stabilise this stretch: cysteine 23-cysteine 66, cysteine 51-cysteine 79, cysteine 84-cysteine 124, cysteine 110-cysteine 137, cysteine 142-cysteine 188, cysteine 174-cysteine 200, cysteine 205-cysteine 248, cysteine 234-cysteine 260, cysteine 264-cysteine 315, cysteine 300-cysteine 325, and cysteine 307-cysteine 345. Threonine 33 carries an O-linked (GalNAc...) threonine glycan. The O-linked (GalNAc...) threonine glycan is linked to threonine 149. Residues asparagine 162, asparagine 183, and asparagine 193 are each glycosylated (N-linked (GlcNAc...) asparagine). Asparagine 253 carries an N-linked (GlcNAc...) asparagine glycan. The tract at residues 263–345 is sushi-like; that stretch reads SCKVPVKKAT…KTDASDVKPC (83 aa).

Expressed by the liver and secreted in plasma.

It localises to the secreted. Binds to various kinds of negatively charged substances such as heparin, phospholipids, and dextran sulfate. May prevent activation of the intrinsic blood coagulation cascade by binding to phospholipids on the surface of damaged cells. This Pan troglodytes (Chimpanzee) protein is Beta-2-glycoprotein 1 (APOH).